A 342-amino-acid polypeptide reads, in one-letter code: S-adenosylmethionine:tRNA ribosyltransferase-isomerase (342 aa).

Belongs to the QueA family. As to quaternary structure, monomer.

The protein resides in the cytoplasm. It carries out the reaction 7-aminomethyl-7-carbaguanosine(34) in tRNA + S-adenosyl-L-methionine = epoxyqueuosine(34) in tRNA + adenine + L-methionine + 2 H(+). It participates in tRNA modification; tRNA-queuosine biosynthesis. In terms of biological role, transfers and isomerizes the ribose moiety from AdoMet to the 7-aminomethyl group of 7-deazaguanine (preQ1-tRNA) to give epoxyqueuosine (oQ-tRNA). This is S-adenosylmethionine:tRNA ribosyltransferase-isomerase from Streptococcus pneumoniae (strain ATCC BAA-255 / R6).